We begin with the raw amino-acid sequence, 367 residues long: GDSL esterase/lipase 3 (367 aa).

An N-terminal signal peptide occupies residues methionine 1–cysteine 23. Serine 42 acts as the Nucleophile in catalysis. Asparagine 175, asparagine 194, and asparagine 321 each carry an N-linked (GlcNAc...) asparagine glycan. Active-site residues include aspartate 329 and histidine 332. A glycan (N-linked (GlcNAc...) asparagine) is linked at asparagine 351.

Belongs to the 'GDSL' lipolytic enzyme family.

It is found in the secreted. The sequence is that of GDSL esterase/lipase 3 (GLIP3) from Arabidopsis thaliana (Mouse-ear cress).